The chain runs to 137 residues: Proline-rich protein 13 (137 aa).

Disordered regions lie at residues 26–54 (PPPL…PCRP) and 94–137 (VGPG…SDSD). Positions 103–124 (KTRKKMKKAHKKSHKHHKHGKH) are enriched in basic residues. Low complexity predominate over residues 125–137 (SSSSSSSSSSDSD).

The protein localises to the nucleus. Its function is as follows. Negatively regulates TSP1 expression at the level of transcription. This down-regulation was shown to reduce taxane-induced apoptosis. The protein is Proline-rich protein 13 (Prr13) of Mus musculus (Mouse).